The primary structure comprises 268 residues: Hemin import ATP-binding protein HmuV (268 aa).

Residues 5 to 242 (IEARHLSKRA…ETIRDIFEID (238 aa)) enclose the ABC transporter domain. 37–44 (GPNGAGKS) contributes to the ATP binding site.

This sequence belongs to the ABC transporter superfamily. Heme (hemin) importer (TC 3.A.1.14.5) family. In terms of assembly, the complex is composed of two ATP-binding proteins (HmuV), two transmembrane proteins (HmuU) and a solute-binding protein (HmuT).

The protein localises to the cell inner membrane. In terms of biological role, part of the ABC transporter complex HmuTUV involved in hemin import. Responsible for energy coupling to the transport system. The sequence is that of Hemin import ATP-binding protein HmuV from Bradyrhizobium diazoefficiens (strain JCM 10833 / BCRC 13528 / IAM 13628 / NBRC 14792 / USDA 110).